The sequence spans 201 residues: Small ribosomal subunit protein uS4c (201 aa).

Residues 89 to 149 enclose the S4 RNA-binding domain; sequence MRLDNILFRL…DKPKSGALIK (61 aa).

This sequence belongs to the universal ribosomal protein uS4 family. As to quaternary structure, part of the 30S ribosomal subunit. Contacts protein S5. The interaction surface between S4 and S5 is involved in control of translational fidelity.

The protein localises to the plastid. Functionally, one of the primary rRNA binding proteins, it binds directly to 16S rRNA where it nucleates assembly of the body of the 30S subunit. Its function is as follows. With S5 and S12 plays an important role in translational accuracy. The chain is Small ribosomal subunit protein uS4c (rps4) from Cuscuta exaltata (Tall dodder).